A 100-amino-acid chain; its full sequence is Large ribosomal subunit protein bL21 (100 aa).

It belongs to the bacterial ribosomal protein bL21 family. Part of the 50S ribosomal subunit. Contacts protein L20.

Functionally, this protein binds to 23S rRNA in the presence of protein L20. The protein is Large ribosomal subunit protein bL21 of Paramagnetospirillum magneticum (strain ATCC 700264 / AMB-1) (Magnetospirillum magneticum).